The sequence spans 187 residues: UPF0301 protein YqgE (187 aa).

This sequence belongs to the UPF0301 (AlgH) family.

This Escherichia coli O7:K1 (strain IAI39 / ExPEC) protein is UPF0301 protein YqgE.